We begin with the raw amino-acid sequence, 205 residues long: CD83 antigen (205 aa).

The N-terminal stretch at 1-19 (MSRGLQLLLLSCAYSLAPA) is a signal peptide. The Ig-like V-type domain occupies 20–114 (TPEVKVACSE…YRCTLQDPDG (95 aa)). The Extracellular segment spans residues 20–144 (TPEVKVACSE…EETFKKYRAE (125 aa)). Cysteine 35 and cysteine 107 are joined by a disulfide. Over residues 60-69 (METPQEDHLR) the composition is skewed to basic and acidic residues. The interval 60–81 (METPQEDHLRGQHYHQKGQNGS) is disordered. N-linked (GlcNAc...) asparagine glycosylation is found at asparagine 79, asparagine 96, and asparagine 117. Residues 145–166 (IVLLLALVIFYLTLIIFTCKFA) traverse the membrane as a helical segment. The Cytoplasmic segment spans residues 167 to 205 (RLQSIFPDFSKAGMERAFLPVTSPNKHLGLVTPHKTELV).

In terms of assembly, monomer. Homodimer. Homotrimer. Interacts with MARCHF1; this interaction antagonizes MARCHF1-mediated MHC II and CD86 down-regulation. Post-translationally, glycosylated when expressed on activated dendritic cells. Expressed by activated lymphocytes, Langerhans cells and activatd dendritic cells.

It is found in the membrane. Functionally, transmembrane glycoprotein predominantly found on the surface of many immune cells including dendritic cells or lymphocytes that plays various roles in immune response regulation. Plays an essential role in CD4(+) T-selection, differentiation and stability by regulating the activity of the major E3 ubiquitin ligase responsible for controlling MHCII trafficking MARCHF8. Also inhibits MARCHF1 association with MHCII or CD86 to prevent their ubiquitination and subsequent degradation. In addition, acts as an important modulator of protective responses against acute infections. The polypeptide is CD83 antigen (CD83) (Homo sapiens (Human)).